A 308-amino-acid chain; its full sequence is Elongation factor Ts (308 aa).

Residues 80–83 (TDFV) are involved in Mg(2+) ion dislocation from EF-Tu.

This sequence belongs to the EF-Ts family.

It is found in the cytoplasm. Functionally, associates with the EF-Tu.GDP complex and induces the exchange of GDP to GTP. It remains bound to the aminoacyl-tRNA.EF-Tu.GTP complex up to the GTP hydrolysis stage on the ribosome. The protein is Elongation factor Ts of Parvibaculum lavamentivorans (strain DS-1 / DSM 13023 / NCIMB 13966).